The chain runs to 608 residues: Glutamine--fructose-6-phosphate aminotransferase [isomerizing] (608 aa).

C2 serves as the catalytic Nucleophile; for GATase activity. Residues 2-217 (CGIVGILGRE…DGDWVVLTRN (216 aa)) enclose the Glutamine amidotransferase type-2 domain. SIS domains follow at residues 284 to 423 (LPFD…ARGE) and 456 to 598 (LARE…VDQP). Residue K603 is the For Fru-6P isomerization activity of the active site.

As to quaternary structure, homodimer.

It localises to the cytoplasm. The enzyme catalyses D-fructose 6-phosphate + L-glutamine = D-glucosamine 6-phosphate + L-glutamate. Its function is as follows. Catalyzes the first step in hexosamine metabolism, converting fructose-6P into glucosamine-6P using glutamine as a nitrogen source. This is Glutamine--fructose-6-phosphate aminotransferase [isomerizing] (glmS) from Bradyrhizobium diazoefficiens (strain JCM 10833 / BCRC 13528 / IAM 13628 / NBRC 14792 / USDA 110).